The following is a 426-amino-acid chain: Glutamate/glutamine/aspartate/asparagine transport system permease protein BztB (426 aa).

The next 8 membrane-spanning stretches (helical) occupy residues 25 to 45 (SITI…WLLN), 96 to 116 (LLVS…IGVL), 132 to 152 (VETF…TILA), 211 to 231 (LPVS…FWGW), 252 to 272 (WWPS…GLGF), 293 to 313 (SFTA…AEIV), 340 to 360 (SLVI…SQFL), and 396 to 416 (MLLM…LMNL). The region spanning 92-414 (LLNTLLVSVL…TISLTISSLM (323 aa)) is the ABC transmembrane type-1 domain.

This sequence belongs to the binding-protein-dependent transport system permease family. HisMQ subfamily. BztB and BztC form a heterodimer which can form a membrane complex with a homodimer of BztD.

It localises to the cell inner membrane. In terms of biological role, part of a binding-protein-dependent transport system for glutamate, glutamine, aspartate and asparagine. Probably responsible for the translocation of the substrate across the membrane. The protein is Glutamate/glutamine/aspartate/asparagine transport system permease protein BztB (bztB) of Rhodobacter capsulatus (strain ATCC BAA-309 / NBRC 16581 / SB1003).